The following is a 580-amino-acid chain: Phosphatase and actin regulator 1 (580 aa).

Phosphoserine occurs at positions 67 and 78. Thr104 is subject to Phosphothreonine. The Nuclear localization signal signature appears at 108–129 (RRRSKFANLGRIFKPWKWRKKK). One copy of the RPEL 1 repeat lies at 138 to 163 (AALERKISMRQSREELIKRGVLKEIY). Disordered regions lie at residues 331-355 (EQRV…TKAG) and 376-410 (KENV…SSLY). Residues 335-345 (PCSTSYHSSGL) are compositionally biased toward polar residues. Residues 395 to 407 (EEEEEEEDEDDDS) show a composition bias toward acidic residues. RPEL repeat units follow at residues 422 to 447 (DSLA…PRQT), 460 to 484 (TKLT…LKPR), and 498 to 523 (RRLT…IRFS). Positions 462-494 (LTRRLSQRPTAEELEQRNILKPRNEQEEQEEKR) are disordered. The residue at position 467 (Ser467) is a Phosphoserine. The span at 471–494 (TAEELEQRNILKPRNEQEEQEEKR) shows a compositional bias: basic and acidic residues. Ser505 is modified (phosphoserine).

It belongs to the phosphatase and actin regulator family. Interacts (via RPEL repeats) with ACTA1 and PPP1CA; ACTA1 and PPP1CA compete for the same binding site. As to expression, detected in umbilical vein endothelial cells.

The protein localises to the cytoplasm. It localises to the synapse. Its subcellular location is the nucleus. Functionally, binds actin monomers (G actin) and plays a role in multiple processes including the regulation of actin cytoskeleton dynamics, actin stress fibers formation, cell motility and survival, formation of tubules by endothelial cells, and regulation of PPP1CA activity. Involved in the regulation of cortical neuron migration and dendrite arborization. The sequence is that of Phosphatase and actin regulator 1 (PHACTR1) from Homo sapiens (Human).